A 322-amino-acid polypeptide reads, in one-letter code: Quinolinate synthase (322 aa).

His37 and Ser54 together coordinate iminosuccinate. Position 99 (Cys99) interacts with [4Fe-4S] cluster. Iminosuccinate-binding positions include 125–127 (YIN) and Ser142. Cys185 is a binding site for [4Fe-4S] cluster. Iminosuccinate-binding positions include 211–213 (HPE) and Thr228. [4Fe-4S] cluster is bound at residue Cys278.

The protein belongs to the quinolinate synthase family. Type 2 subfamily. It depends on [4Fe-4S] cluster as a cofactor.

The protein localises to the cytoplasm. The enzyme catalyses iminosuccinate + dihydroxyacetone phosphate = quinolinate + phosphate + 2 H2O + H(+). Its pathway is cofactor biosynthesis; NAD(+) biosynthesis; quinolinate from iminoaspartate: step 1/1. Catalyzes the condensation of iminoaspartate with dihydroxyacetone phosphate to form quinolinate. The protein is Quinolinate synthase of Prosthecochloris aestuarii (strain DSM 271 / SK 413).